The sequence spans 633 residues: DNA mismatch repair protein MutL (633 aa).

Disordered stretches follow at residues 337-364 (RPDDQLAPPGATSLTEPRPTGAAAGEFG) and 383-405 (VGWSGGSSASGGSSGYSAYTRPE). Positions 385–396 (WSGGSSASGGSS) are enriched in gly residues.

It belongs to the DNA mismatch repair MutL/HexB family.

Its function is as follows. This protein is involved in the repair of mismatches in DNA. It is required for dam-dependent methyl-directed DNA mismatch repair. May act as a 'molecular matchmaker', a protein that promotes the formation of a stable complex between two or more DNA-binding proteins in an ATP-dependent manner without itself being part of a final effector complex. The protein is DNA mismatch repair protein MutL of Pseudomonas aeruginosa (strain LESB58).